The primary structure comprises 310 residues: Nodulation protein D 1 (310 aa).

Positions 6-63 (LDLNLLVALDALMTERQLTAAARRINLSQPAMSAAIARLRNYFHDDLFVMQGRELILT) constitute an HTH lysR-type domain. The H-T-H motif DNA-binding region spans 23 to 42 (LTAAARRINLSQPAMSAAIA).

It belongs to the LysR transcriptional regulatory family.

In terms of biological role, nodD regulates the expression of the nodABCFE genes which encode other nodulation proteins. NodD is also a negative regulator of its own expression. Binds flavonoids as inducers. The protein is Nodulation protein D 1 (nodD1) of Neorhizobium galegae (Rhizobium galegae).